The chain runs to 353 residues: D-alanine--D-alanine ligase A (353 aa).

One can recognise an ATP-grasp domain in the interval Lys-141 to Ala-346. Glu-169 to Glu-224 contacts ATP. Mg(2+) is bound by residues Asp-300, Glu-313, and Asn-315.

This sequence belongs to the D-alanine--D-alanine ligase family. Requires Mg(2+) as cofactor. Mn(2+) is required as a cofactor.

Its subcellular location is the cytoplasm. The enzyme catalyses 2 D-alanine + ATP = D-alanyl-D-alanine + ADP + phosphate + H(+). Its pathway is cell wall biogenesis; peptidoglycan biosynthesis. Cell wall formation. The sequence is that of D-alanine--D-alanine ligase A from Brucella melitensis biotype 1 (strain ATCC 23456 / CCUG 17765 / NCTC 10094 / 16M).